The chain runs to 27 residues: M-lycotoxin-Hc2a (27 aa).

Expressed by the venom gland.

The protein localises to the secreted. Its function is as follows. Forms pore that permeabilize the cell membrane. Promotes efflux of calcium from synaptosomes, causes hemolysis, and dissipates voltage gradients across muscle membrane. Potently inhibits the growth of bacteria, yeast and Leishmania. May function both in the prey capture strategy as well as protection from infectious organisms arising from prey ingestion. The sequence is that of M-lycotoxin-Hc2a from Hogna carolinensis (Carolina wolf spider).